Consider the following 207-residue polypeptide: Guanylate kinase (207 aa).

One can recognise a Guanylate kinase-like domain in the interval 5-184 (GNLFIVSAPS…ALADLVAIIR (180 aa)). Position 12-19 (12-19 (APSGAGKS)) interacts with ATP.

This sequence belongs to the guanylate kinase family.

It is found in the cytoplasm. The catalysed reaction is GMP + ATP = GDP + ADP. Functionally, essential for recycling GMP and indirectly, cGMP. The sequence is that of Guanylate kinase from Shewanella violacea (strain JCM 10179 / CIP 106290 / LMG 19151 / DSS12).